We begin with the raw amino-acid sequence, 274 residues long: tRNA (guanine-N(7)-)-methyltransferase (274 aa).

The disordered stretch occupies residues 16-40 (ASASRGAATGSRGVAPAVPRGGAPA). S-adenosyl-L-methionine is bound by residues glutamate 106, glutamate 131, aspartate 158, and aspartate 181. The active site involves aspartate 181. Residues lysine 185, aspartate 217, and 252–255 (TKFE) each bind substrate.

Belongs to the class I-like SAM-binding methyltransferase superfamily. TrmB family.

The enzyme catalyses guanosine(46) in tRNA + S-adenosyl-L-methionine = N(7)-methylguanosine(46) in tRNA + S-adenosyl-L-homocysteine. It functions in the pathway tRNA modification; N(7)-methylguanine-tRNA biosynthesis. Catalyzes the formation of N(7)-methylguanine at position 46 (m7G46) in tRNA. The chain is tRNA (guanine-N(7)-)-methyltransferase from Verminephrobacter eiseniae (strain EF01-2).